We begin with the raw amino-acid sequence, 248 residues long: MEGVEEKKKEVPAVPETLKKKRRNFAELKIKRLRKKFAQKMLRKARRKLIYEKAKHYHKEYRQMYRTEIRMARMARKAGNFYVPAEPKLAFVIRIRGINGVSPKVRKVLQLLRLRQIFNGTFVKLNKASINMLRIVEPYIAWGYPNLKSVNELIYKRGYGKINKKRIALTDNALIARSLGKYGIICMEDLIHEIYTVGKRFKEANNFLWPFKLSSPRGGMKKKTTHFVEGGDAGNREDQINRLIRRMN.

Methionine 1 bears the N-acetylmethionine mark. Repeat copies occupy residues 7-18 (KKKEVPAVPETL), 19-30 (KKKRRNFAELKI), 31-42 (KRLRKKFAQKML), and 43-54 (RKARRKLIYEKA). The 4 X 12 AA tandem repeats stretch occupies residues 7–54 (KKKEVPAVPETLKKKRRNFAELKIKRLRKKFAQKMLRKARRKLIYEKA). Threonine 17 bears the Phosphothreonine mark. Residue lysine 124 is modified to N6-acetyllysine. Lysine 127 bears the N6-succinyllysine mark. A Phosphotyrosine modification is found at tyrosine 139.

The protein belongs to the universal ribosomal protein uL30 family. In terms of assembly, component of the large ribosomal subunit. Homodimer. Interacts with DHX33.

It is found in the cytoplasm. Functionally, component of the large ribosomal subunit. The ribosome is a large ribonucleoprotein complex responsible for the synthesis of proteins in the cell. Binds to G-rich structures in 28S rRNA and in mRNAs. Plays a regulatory role in the translation apparatus; inhibits cell-free translation of mRNAs. This chain is Large ribosomal subunit protein uL30 (RPL7), found in Homo sapiens (Human).